A 311-amino-acid chain; its full sequence is Malate dehydrogenase (311 aa).

NAD(+) contacts are provided by residues 7–13 (GAAGGIG) and Asp34. Residues Arg81 and Arg87 each coordinate substrate. Residues Asn94 and 117–119 (ITN) contribute to the NAD(+) site. The substrate site is built by Asn119 and Arg153. His177 serves as the catalytic Proton acceptor. Position 227 (Met227) interacts with NAD(+).

It belongs to the LDH/MDH superfamily. MDH type 1 family. In terms of assembly, homodimer.

The catalysed reaction is (S)-malate + NAD(+) = oxaloacetate + NADH + H(+). Functionally, catalyzes the reversible oxidation of malate to oxaloacetate. The protein is Malate dehydrogenase of Aeromonas salmonicida (strain A449).